Consider the following 31-residue polypeptide: Phospholipase A2 homolog P-elapitoxin-Aa1a beta chain (31 aa).

Belongs to the phospholipase A2 family. Group I subfamily. As to quaternary structure, heterotrimer of alpha, beta and gamma chains, each related to PLA2. Expressed by the venom gland.

It is found in the secreted. In terms of biological role, heterotrimer: Snake venom phospholipase A2 (PLA2) that has presynaptic neurotoxicity. Inhibits nerve-evoked twitch contractions but not responses to cholinergic agonists acetylcholine and carbachol and to depolarizing agonist KCl. Causes a fade in tetanic contractions. Displays a triphasic mode of action with depression, enhancement and blockade of neurotransmission. Does not display myotoxic activity such as changes in baseline muscle tension or inhibition of directly stimulated muscle twitches. All subunits are necessary for maximum toxicity. Its function is as follows. Monomer: The beta chain has no enzymatic activity and is not toxic by itself. This chain is Phospholipase A2 homolog P-elapitoxin-Aa1a beta chain, found in Acanthophis antarcticus (Common death adder).